The following is a 277-amino-acid chain: Short chain dehydrogenase penD (277 aa).

Isoleucine 28, aspartate 76, and asparagine 105 together coordinate NADP(+). Residues serine 158 and serine 159 each act as proton donor in the active site. NADP(+)-binding residues include tyrosine 173, lysine 177, and threonine 209. Tyrosine 173 acts as the Proton acceptor in catalysis. Lysine 177 (lowers pKa of active site Tyr) is an active-site residue.

This sequence belongs to the short-chain dehydrogenases/reductases (SDR) family.

The enzyme catalyses yaequinolone D + NADPH + H(+) = penigequinolone A + NADP(+) + H2O. It carries out the reaction yaequinolone D + NADPH + H(+) = penigequinolone B + NADP(+) + H2O. It functions in the pathway secondary metabolite biosynthesis. The protein operates within alkaloid biosynthesis. Its pathway is mycotoxin biosynthesis. Functionally, short chain dehydrogenase; part of the gene cluster that mediates the biosynthesis of penigequinolones, potent insecticidal alkaloids that contain a highly modified 10-carbon prenyl group. The first stage is catalyzed by the nonribosomal peptide synthetase penN that condenses anthranilic acid and O-methyl-L-tyrosine to produce 4'-methoxycyclopeptin. 4'-methoxycyclopeptin is then converted to 4'-methoxydehydrocyclopeptin by the ketoglutarate-dependent dioxygenase penM through dehydrogenation to form a double bond between C-alpha and C-beta of the O-methyltyrosine side chain. PenM also converts its first product methoxydehydrocyclopeptin to 4'-methoxycyclopenin. The following conversion of 4'methoxycyclopenin into 4'-methoxyviridicatin is catalyzed by the cyclopenase penL. 4'-methoxyviridicatin is the precursor of quinolone natural products, and is further converted to quinolinone B. The prenyltransferase penI then catalyzes the canonical Friedel-Crafts alkylation of quinolinone B with dimethylallyl cation to yield dimethylallyl quinolone, which is subjected to FAD-dependent dehydrogenation by the FAD-linked oxidoreductase penH to yield conjugated aryl diene. The delta(3') double bond then serves as the site of the second alkylation with DMAPP catalyzed by the prenyltransferase penG to yield a carbenium ion intermediate, which can be attacked by H(2)O to yield a styrenyl quinolone containing a C3'-hydroxyprenyl chain, or undergo cyclization to yield yaequinolones J1 and J2. The conversion of the styrenyl quinolone into the tetrahydrofuran-containing yaequinolone C is performed by the FAD-dependent monooxygenase penE and involves epoxidation of the terminal C7'-C8' olefin, followed by epoxide ring opening initiated by the C3' hydroxyl group. The predicted cysteine hydrolase penJ acts as an epoxide hydrolase that enhances the rate of the 5-exo-tet cyclization step, increasing the yield of yaequinolone C. PenF catalyzes the cationic rearrangement of the epoxide formed by penE (before ring opening to produce yaequinolone C) into yaequinolone D. Finally, the short-chain dehydrogenase/reductase (SDR)-like reductase penD, catalyzes both the dehydration of yaequinolone D and the reduction of the resulting oxonium to yield penigequinolone. The chain is Short chain dehydrogenase penD from Penicillium thymicola.